The chain runs to 376 residues: Chaperone protein DnaJ (376 aa).

The region spanning 5–70 (DYYEVLGVAK…QKRAAYDQYG (66 aa)) is the J domain. The CR-type zinc-finger motif lies at 136–214 (GYDTQIRVPS…CHGSGKVKET (79 aa)). Residues Cys149, Cys152, Cys166, Cys169, Cys188, Cys191, Cys202, and Cys205 each coordinate Zn(2+). CXXCXGXG motif repeat units lie at residues 149–156 (CEVCHGSG), 166–173 (CPTCHGQG), 188–195 (CPKCHGTG), and 202–209 (CAHCHGSG).

Belongs to the DnaJ family. In terms of assembly, homodimer. Zn(2+) is required as a cofactor.

The protein localises to the cytoplasm. Participates actively in the response to hyperosmotic and heat shock by preventing the aggregation of stress-denatured proteins and by disaggregating proteins, also in an autonomous, DnaK-independent fashion. Unfolded proteins bind initially to DnaJ; upon interaction with the DnaJ-bound protein, DnaK hydrolyzes its bound ATP, resulting in the formation of a stable complex. GrpE releases ADP from DnaK; ATP binding to DnaK triggers the release of the substrate protein, thus completing the reaction cycle. Several rounds of ATP-dependent interactions between DnaJ, DnaK and GrpE are required for fully efficient folding. Also involved, together with DnaK and GrpE, in the DNA replication of plasmids through activation of initiation proteins. The protein is Chaperone protein DnaJ of Burkholderia multivorans (strain ATCC 17616 / 249).